The chain runs to 689 residues: 1,4-alpha-glucan-branching enzyme (689 aa).

(1,4-alpha-D-glucosyl)n contacts are provided by Trp93 and Lys128. The active-site Nucleophile is Asp345. Glu400 acts as the Proton donor in catalysis.

This sequence belongs to the glycosyl hydrolase 13 family. GlgB subfamily.

Its subcellular location is the cytoplasm. It carries out the reaction Transfers a segment of a (1-&gt;4)-alpha-D-glucan chain to a primary hydroxy group in a similar glucan chain.. The protein operates within glycan biosynthesis; glycogen biosynthesis. In terms of biological role, glycogen-branching enzyme participates in the glycogen biosynthetic process along with glycogenin and glycogen synthase. Generates alpha-1,6-glucosidic branches from alpha-1,4-linked glucose chains, to increase solubility of the glycogen polymer. The sequence is that of 1,4-alpha-glucan-branching enzyme (gbeA) from Aspergillus oryzae (strain ATCC 42149 / RIB 40) (Yellow koji mold).